The following is a 125-amino-acid chain: Cytochrome c oxidase assembly factor 6 homolog (125 aa).

An N-acetylalanine modification is found at glycine 2. In terms of domain architecture, CHCH spans 55–98 (RQVCWGARDEYWKCLDENLEDASQCKKLRSSFESSCPQQWIKYF). A Cx9C motif motif is present at residues 58–68 (CWGARDEYWKC). Intrachain disulfides connect cysteine 58-cysteine 90 and cysteine 68-cysteine 79. The short motif at 79 to 90 (CKKLRSSFESSC) is the Cx10C motif element.

It belongs to the cytochrome c oxidase subunit 6B family. As to quaternary structure, interacts with COA1. Found in a complex with TMEM177, COX20, MT-CO2/COX2, COX18, SCO1 and SCO2. Interacts with MT-CO2/COX2 and SCO2. Interacts with SCO1. Interacts with COX20 in a MT-CO2/COX2- and COX18-dependent manner. Interacts with COX16.

It is found in the mitochondrion intermembrane space. Involved in the maturation of the mitochondrial respiratory chain complex IV subunit MT-CO2/COX2. Thereby, may regulate early steps of complex IV assembly. Mitochondrial respiratory chain complex IV or cytochrome c oxidase is the component of the respiratory chain that catalyzes the transfer of electrons from intermembrane space cytochrome c to molecular oxygen in the matrix and as a consequence contributes to the proton gradient involved in mitochondrial ATP synthesis. May also be required for efficient formation of respiratory supercomplexes comprised of complexes III and IV. In Homo sapiens (Human), this protein is Cytochrome c oxidase assembly factor 6 homolog (COA6).